The sequence spans 596 residues: MHCLVILGFLLGSLVAFSWAGVTTQPPPLIRTLSAGGDIGPQFDVGKTKEPEDAEFWHNVGLRQLEKTIKQAQRVKEDSYQKKARNIIIFIGDGMGISTISAGRIYKGQYLKHGYGEEETLVFDDFPNTGMAKTYNVDKQVPDSAGTATAIFSGSKTHYGAIGMDATRSKKNGQQGRVQSVMEWAQKEGKRTGVVTTTRITHATPAATYAHIYDRDWECDTEVPAESVGFHVDIARQLVENAPGNRFNVILGGGMSPMGILNASEVKTTIFEGPTETICTRGDNRNLPAEWLAHHANDTVPPALVHNRKDLLNVNVKKVDHLMGLFRNNHITYSIAREAGEPSLQEMTETALGILERGDESNGFVLLVEGGRIDQGHHMNYARAALHELYEFDLAIQAAVNNTDPDETLILVTADHSHAVTFNGYALRGADILGTANSHEKNDPMFYETISYANGPGYWDHLANDSRPQNSSNMWMPLKHFTAEERAAPTYRHLATVPRKDETHGGEDVAVFAYGPGSSLIRGVFEQNYLAYVMSYAGCLGPAKDFDDSCEDHKDGQKDRPLDKPNPKRNGATVVGASLIPILTAATAAILRGRGL.

The signal sequence occupies residues 1-20; sequence MHCLVILGFLLGSLVAFSWA. A Mg(2+)-binding site is contributed by Asp93. Asp93 provides a ligand contact to Zn(2+). Ser144 serves as the catalytic Phosphoserine intermediate. Mg(2+) contacts are provided by His202 and Thr204. N-linked (GlcNAc...) asparagine glycosylation is found at Asn262 and Asn297. Glu369 contributes to the Mg(2+) binding site. Asp374 and His378 together coordinate Zn(2+). Asn401 carries N-linked (GlcNAc...) asparagine glycosylation. 2 residues coordinate Zn(2+): Asp415 and His416. Asn464 and Asn470 each carry an N-linked (GlcNAc...) asparagine glycan. His504 serves as a coordination point for Zn(2+). An intrachain disulfide couples Cys539 to Cys550. The segment covering 548-566 has biased composition (basic and acidic residues); the sequence is DSCEDHKDGQKDRPLDKPN. Residues 548 to 570 form a disordered region; sequence DSCEDHKDGQKDRPLDKPNPKRN. Residue Asn570 is the site of GPI-anchor amidated asparagine attachment. A helical membrane pass occupies residues 571–591; it reads GATVVGASLIPILTAATAAIL. The propeptide at 571–596 is removed in mature form; sequence GATVVGASLIPILTAATAAILRGRGL.

This sequence belongs to the alkaline phosphatase family. As to quaternary structure, homodimer. Requires Mg(2+) as cofactor. Zn(2+) is required as a cofactor. As to expression, ellipsoid body ring neurons in the adult brain and in the lower Malpighian tubule and ureter.

The protein resides in the cell membrane. It catalyses the reaction a phosphate monoester + H2O = an alcohol + phosphate. In terms of biological role, important role in neural and renal epithelial function. The protein is Alkaline phosphatase 4 of Drosophila melanogaster (Fruit fly).